We begin with the raw amino-acid sequence, 391 residues long: DNA-directed RNA polymerase subunit Rpo1C (391 aa).

This sequence belongs to the RNA polymerase beta' chain family. As to quaternary structure, part of the RNA polymerase complex.

Its subcellular location is the cytoplasm. The catalysed reaction is RNA(n) + a ribonucleoside 5'-triphosphate = RNA(n+1) + diphosphate. DNA-dependent RNA polymerase (RNAP) catalyzes the transcription of DNA into RNA using the four ribonucleoside triphosphates as substrates. Forms part of the jaw domain. The polypeptide is DNA-directed RNA polymerase subunit Rpo1C (Thermococcus gammatolerans (strain DSM 15229 / JCM 11827 / EJ3)).